The following is a 20-amino-acid chain: Cytochrome c oxidase subunit 6A1, mitochondrial (20 aa).

The protein belongs to the cytochrome c oxidase subunit 6A family. In terms of assembly, component of the cytochrome c oxidase (complex IV, CIV), a multisubunit enzyme composed of 14 subunits. The complex is composed of a catalytic core of 3 subunits MT-CO1, MT-CO2 and MT-CO3, encoded in the mitochondrial DNA, and 11 supernumerary subunits COX4I, COX5A, COX5B, COX6A, COX6B, COX6C, COX7A, COX7B, COX7C, COX8 and NDUFA4, which are encoded in the nuclear genome. The complex exists as a monomer or a dimer and forms supercomplexes (SCs) in the inner mitochondrial membrane with NADH-ubiquinone oxidoreductase (complex I, CI) and ubiquinol-cytochrome c oxidoreductase (cytochrome b-c1 complex, complex III, CIII), resulting in different assemblies (supercomplex SCI(1)III(2)IV(1) and megacomplex MCI(2)III(2)IV(2)). As to expression, liver specific isoform.

The protein localises to the mitochondrion inner membrane. It participates in energy metabolism; oxidative phosphorylation. Its function is as follows. Component of the cytochrome c oxidase, the last enzyme in the mitochondrial electron transport chain which drives oxidative phosphorylation. The respiratory chain contains 3 multisubunit complexes succinate dehydrogenase (complex II, CII), ubiquinol-cytochrome c oxidoreductase (cytochrome b-c1 complex, complex III, CIII) and cytochrome c oxidase (complex IV, CIV), that cooperate to transfer electrons derived from NADH and succinate to molecular oxygen, creating an electrochemical gradient over the inner membrane that drives transmembrane transport and the ATP synthase. Cytochrome c oxidase is the component of the respiratory chain that catalyzes the reduction of oxygen to water. Electrons originating from reduced cytochrome c in the intermembrane space (IMS) are transferred via the dinuclear copper A center (CU(A)) of subunit 2 and heme A of subunit 1 to the active site in subunit 1, a binuclear center (BNC) formed by heme A3 and copper B (CU(B)). The BNC reduces molecular oxygen to 2 water molecules unsing 4 electrons from cytochrome c in the IMS and 4 protons from the mitochondrial matrix. The protein is Cytochrome c oxidase subunit 6A1, mitochondrial (COX6A1) of Canis lupus familiaris (Dog).